A 77-amino-acid chain; its full sequence is U8-lycotoxin-Ls1r (77 aa).

Positions 1–20 (MKLIIFTGLVLFAIVSLIEA) are cleaved as a signal peptide. Residues 21 to 26 (QAENEK) constitute a propeptide that is removed on maturation.

The protein belongs to the neurotoxin 19 (CSTX) family. 08 (U8-Lctx) subfamily. Post-translationally, contains 4 disulfide bonds. As to expression, expressed by the venom gland.

Its subcellular location is the secreted. The sequence is that of U8-lycotoxin-Ls1r from Lycosa singoriensis (Wolf spider).